The primary structure comprises 282 residues: Phosphatidylglycerol--prolipoprotein diacylglyceryl transferase (282 aa).

The next 3 membrane-spanning stretches (helical) occupy residues 18–38 (IQVH…VALA), 56–76 (ILWA…IFQW), and 89–109 (IWDG…VVIL). Arg-137 provides a ligand contact to a 1,2-diacyl-sn-glycero-3-phospho-(1'-sn-glycerol). The chain crosses the membrane as a helical span at residues 237 to 257 (VIRVSQALSVVLFFGSIGLMI).

The protein belongs to the Lgt family.

It localises to the cell membrane. The enzyme catalyses L-cysteinyl-[prolipoprotein] + a 1,2-diacyl-sn-glycero-3-phospho-(1'-sn-glycerol) = an S-1,2-diacyl-sn-glyceryl-L-cysteinyl-[prolipoprotein] + sn-glycerol 1-phosphate + H(+). The protein operates within protein modification; lipoprotein biosynthesis (diacylglyceryl transfer). Functionally, catalyzes the transfer of the diacylglyceryl group from phosphatidylglycerol to the sulfhydryl group of the N-terminal cysteine of a prolipoprotein, the first step in the formation of mature lipoproteins. In Lactiplantibacillus plantarum (strain ATCC BAA-793 / NCIMB 8826 / WCFS1) (Lactobacillus plantarum), this protein is Phosphatidylglycerol--prolipoprotein diacylglyceryl transferase.